The following is a 945-amino-acid chain: Sensor kinase CckA (945 aa).

2 consecutive transmembrane segments (helical) span residues 111–131 (ALRL…YFLF) and 139–159 (FALV…FGAA). PAS domains are found at residues 171–212 (HQDL…TDAD), 313–341 (LDHA…EWLG), and 432–505 (AEVR…FAGQ). Residues 574–797 (GIAHDFNNVL…TFKIFLPRLI (224 aa)) form the Histidine kinase domain. At H577 the chain carries Phosphohistidine; by autocatalysis. Residues 825-941 (TVLLVEDEDA…QLATTVKEML (117 aa)) form the Response regulatory domain. Position 876 is a 4-aspartylphosphate (D876).

The protein resides in the cell inner membrane. The catalysed reaction is ATP + protein L-histidine = ADP + protein N-phospho-L-histidine.. Functionally, component of a regulatory phosphorelay system that controls B.abortus cell growth, division, and intracellular survival inside mammalian host cells. This signaling pathway is composed of CckA, ChpT, CtrA and CpdR. CckA autophosphorylates in the presence of ATP on a conserved His residue and transfers a phosphoryl group to a conserved Asp residue on its C-terminal receiver domain. CckA-P transfers phosphoryl groups to the ChpT phosphotransferase. The polypeptide is Sensor kinase CckA (Brucella abortus (strain 2308)).